The primary structure comprises 217 residues: Ribonuclease HII (217 aa).

Residues 27–216 (SQVAGVDEAG…VKESIQEGVC (190 aa)) form the RNase H type-2 domain. A divalent metal cation is bound by residues aspartate 33, glutamate 34, and aspartate 126.

The protein belongs to the RNase HII family. It depends on Mn(2+) as a cofactor. Requires Mg(2+) as cofactor.

The protein resides in the cytoplasm. It catalyses the reaction Endonucleolytic cleavage to 5'-phosphomonoester.. Its function is as follows. Endonuclease that specifically degrades the RNA of RNA-DNA hybrids. The protein is Ribonuclease HII of Chlamydia trachomatis serovar L2 (strain ATCC VR-902B / DSM 19102 / 434/Bu).